The sequence spans 525 residues: MTKNIHKHRILILDFGSQYTQLLARRVREIGVYCELWAWDVTEAQIREFNPSGIILSGSPESTIENGSPRAPDYVFTAGVPVLGVCYGMQTMAIQLGGKVESSNQREFGYAQVEIKADSALIRDIKDAINPAGEAVLDVWMSHGDKVAEIPADFVTVASTDTCPFAIMANEEKRFYGVQFHPEVTHTKQGLRLLERFVLGICGCEALWTSATIIEDAIVRLREQIGDDHVILGLSGGVDSSVTAMLLHRAIGKRLTCVFVDNGLLRLNEADQVLEMFGDKFGLNIVHVAAEDRFLSALAGVDEPEAKRKIIGRVFVELFDEEACKQEQVKWLAQGTIYPDVIESAASATGKAHVIKSHHNVGGLPKEMKLGLVEPLKELFKDEVRKIGLELGLPYDMLYRHPFPGPGLGVRVLGEVKKEYCDLLRRADAIFIEELHKADLYNKVSQAFTVFLPVRSVGVMGDGRKYDWVVSLRAVETVDFMTAHWAHLPYDFLGRVSNRIINEVNGISRVVYDISGKPPATIEWE.

The Glutamine amidotransferase type-1 domain occupies 9–207 (RILILDFGSQ…VLGICGCEAL (199 aa)). The active-site Nucleophile is the Cys86. Active-site residues include His181 and Glu183. A GMPS ATP-PPase domain is found at 208–400 (WTSATIIEDA…LGLPYDMLYR (193 aa)). 235–241 (SGGVDSS) lines the ATP pocket.

In terms of assembly, homodimer.

It catalyses the reaction XMP + L-glutamine + ATP + H2O = GMP + L-glutamate + AMP + diphosphate + 2 H(+). It functions in the pathway purine metabolism; GMP biosynthesis; GMP from XMP (L-Gln route): step 1/1. Its function is as follows. Catalyzes the synthesis of GMP from XMP. This Yersinia pseudotuberculosis serotype IB (strain PB1/+) protein is GMP synthase [glutamine-hydrolyzing].